Consider the following 159-residue polypeptide: Ribosomal RNA large subunit methyltransferase H (159 aa).

Residues L76, G108, and 127–132 (FGQLTL) each bind S-adenosyl-L-methionine.

It belongs to the RNA methyltransferase RlmH family. In terms of assembly, homodimer.

Its subcellular location is the cytoplasm. It carries out the reaction pseudouridine(1915) in 23S rRNA + S-adenosyl-L-methionine = N(3)-methylpseudouridine(1915) in 23S rRNA + S-adenosyl-L-homocysteine + H(+). Specifically methylates the pseudouridine at position 1915 (m3Psi1915) in 23S rRNA. This Streptococcus suis (strain 05ZYH33) protein is Ribosomal RNA large subunit methyltransferase H.